A 190-amino-acid polypeptide reads, in one-letter code: Dynactin subunit 6 (190 aa).

T186 bears the Phosphothreonine mark.

The protein belongs to the dynactin subunits 5/6 family. Dynactin subunit 6 subfamily. As to quaternary structure, subunit of dynactin, a multiprotein complex part of a tripartite complex with dynein and a adapter, such as BICDL1, BICD2 or HOOK3. The dynactin complex is built around ACTR1A/ACTB filament and consists of an actin-related filament composed of a shoulder domain, a pointed end and a barbed end. Its length is defined by its flexible shoulder domain. The soulder is composed of 2 DCTN1 subunits, 4 DCTN2 and 2 DCTN3. The 4 DCNT2 (via N-terminus) bind the ACTR1A filament and act as molecular rulers to determine the length. The pointed end is important for binding dynein-dynactin cargo adapters. Consists of 4 subunits: ACTR10, DCNT4, DCTN5 and DCTN6. Within the complex DCTN6 forms a heterodimer with DCTN5. The barbed end is composed of a CAPZA1:CAPZB heterodimers, which binds ACTR1A/ACTB filament and dynactin and stabilizes dynactin. Interacts with PLK1. Interacts with N4BP2L1. Post-translationally, phosphorylation at Thr-186 by CDK1 during mitotic prometaphase creates a binding site for PLK1 that facilitates its recruitment to kinetochores.

The protein resides in the cytoplasm. It localises to the cytoskeleton. The protein localises to the chromosome. It is found in the centromere. Its subcellular location is the kinetochore. In terms of biological role, part of the dynactin complex that activates the molecular motor dynein for ultra-processive transport along microtubules. The sequence is that of Dynactin subunit 6 (DCTN6) from Sus scrofa (Pig).